We begin with the raw amino-acid sequence, 1052 residues long: SE-cephalotoxin (1052 aa).

The N-terminal stretch at 1–21 is a signal peptide; that stretch reads MMGTSRCVILLFALLLWAANA. Residues 22–29 constitute a propeptide that is removed on maturation; sequence APPEIHTT. N-linked (GlcNAc...) asparagine glycosylation occurs at N41. Residues 130 to 194 adopt a coiled-coil conformation; it reads TGVNRKLDQI…DMNKRRLMAE (65 aa). Residue N353 is glycosylated (N-linked (GlcNAc...) asparagine). Residues 460–497 enclose the EGF-like domain; sequence PGNPCNHGCNGHGECKVVPYTDQFQCFCHGNYEGKMCQ. Intrachain disulfides connect C464/C474, C468/C485, and C487/C496. N-linked (GlcNAc...) asparagine glycosylation is found at N576 and N715. One can recognise a Sushi domain in the interval 709-769; the sequence is TSCPPLNVTH…QWSATPKCES (61 aa). 7 disulfides stabilise this stretch: C711–C752, C739–C767, C780–C814, C784–C820, C795–C804, C829–C847, and C841–C858. Positions 768–821 constitute a TSP type-1 domain; that stretch reads ESSWSRWSKWSACASTCGNATQSRRRRCLGQSESEKCIGPSKQVRKCFVEDCCQ. A glycan (N-linked (GlcNAc...) asparagine) is linked at N786. The LDL-receptor class A domain maps to 819-859; that stretch reads CCQEKYGKFKCDNNKCISLSRVCDGNDDCRNAEDESKSRCK.

Monomer. As to expression, expressed by the salivary gland.

The protein resides in the secreted. The polypeptide is SE-cephalotoxin (Acanthosepion esculentum (Golden cuttlefish)).